The primary structure comprises 91 residues: Small ribosomal subunit protein bS20 (91 aa).

Disordered regions lie at residues 1 to 26 (MALR…RSRK) and 67 to 91 (HKNA…AQQS).

This sequence belongs to the bacterial ribosomal protein bS20 family.

Functionally, binds directly to 16S ribosomal RNA. The polypeptide is Small ribosomal subunit protein bS20 (Deinococcus deserti (strain DSM 17065 / CIP 109153 / LMG 22923 / VCD115)).